A 64-amino-acid chain; its full sequence is Disintegrin schistatin (64 aa).

The 64-residue stretch at 1 to 64 (NSVHPCCDPV…PDCPRNRYNV (64 aa)) folds into the Disintegrin domain. Disulfide bonds link C6/C29, C20/C26, C25/C50, and C38/C57. A Cell attachment site motif is present at residues 42–44 (RGD).

The protein belongs to the disintegrin family. Dimeric disintegrin subfamily. Homodimer; disulfide-linked. Expressed by the venom gland.

The protein localises to the secreted. May bind to both alpha-IIb/beta-3 (ITGA2B/ITGB3) and alpha-V/beta-3 (ITGAV/ITGB3) integrins, and may inhibit platelet aggregation. The polypeptide is Disintegrin schistatin (Echis carinatus (Saw-scaled viper)).